The sequence spans 127 residues: Fluoride-specific ion channel FluC (127 aa).

The next 4 helical transmembrane spans lie at 4-24, 35-55, 71-91, and 103-123; these read TLLA…QLGV, LGTL…LAFF, TGLC…IMFL, and VLLN…LVTW. 2 residues coordinate Na(+): G75 and T78.

This sequence belongs to the fluoride channel Fluc/FEX (TC 1.A.43) family.

The protein resides in the cell inner membrane. It catalyses the reaction fluoride(in) = fluoride(out). Na(+) is not transported, but it plays an essential structural role and its presence is essential for fluoride channel function. Functionally, fluoride-specific ion channel. Important for reducing fluoride concentration in the cell, thus reducing its toxicity. The polypeptide is Fluoride-specific ion channel FluC (Pectobacterium carotovorum subsp. carotovorum (strain PC1)).